Consider the following 138-residue polypeptide: Small ribosomal subunit protein uS12 (138 aa).

The tract at residues lysine 33 to proline 55 is disordered. Aspartate 102 carries the post-translational modification 3-methylthioaspartic acid.

The protein belongs to the universal ribosomal protein uS12 family. Part of the 30S ribosomal subunit. Contacts proteins S8 and S17. May interact with IF1 in the 30S initiation complex.

Functionally, with S4 and S5 plays an important role in translational accuracy. In terms of biological role, interacts with and stabilizes bases of the 16S rRNA that are involved in tRNA selection in the A site and with the mRNA backbone. Located at the interface of the 30S and 50S subunits, it traverses the body of the 30S subunit contacting proteins on the other side and probably holding the rRNA structure together. The combined cluster of proteins S8, S12 and S17 appears to hold together the shoulder and platform of the 30S subunit. The protein is Small ribosomal subunit protein uS12 of Bacillus velezensis (strain DSM 23117 / BGSC 10A6 / LMG 26770 / FZB42) (Bacillus amyloliquefaciens subsp. plantarum).